Here is a 309-residue protein sequence, read N- to C-terminus: Tagatose-6-phosphate kinase (309 aa).

This sequence belongs to the carbohydrate kinase PfkB family. LacC subfamily.

The enzyme catalyses D-tagatofuranose 6-phosphate + ATP = D-tagatofuranose 1,6-bisphosphate + ADP + H(+). It participates in carbohydrate metabolism; D-tagatose 6-phosphate degradation; D-glyceraldehyde 3-phosphate and glycerone phosphate from D-tagatose 6-phosphate: step 1/2. The polypeptide is Tagatose-6-phosphate kinase (Streptococcus pneumoniae serotype 4 (strain ATCC BAA-334 / TIGR4)).